We begin with the raw amino-acid sequence, 178 residues long: CASP-like protein 5A1 (178 aa).

Low complexity predominate over residues 1 to 11 (MFASRPAVHPV). The interval 1 to 25 (MFASRPAVHPVEAPPPPDPAEQPRG) is disordered. At 1–37 (MFASRPAVHPVEAPPPPDPAEQPRGVLMKDLPGMPGT) the chain is on the cytoplasmic side. Residues 38–58 (AGGLGLRLAQFAFAAVALAVM) traverse the membrane as a helical segment. At 59 to 69 (ASTNDFPSVTS) the chain is on the extracellular side. The helical transmembrane segment at 70-90 (FCFLVAAAILQCLWSFSLAIV) threads the bilayer. Over 91 to 105 (DIYALLVKRCLRNRR) the chain is Cytoplasmic. Residues 106–126 (AVCLFAIGDGITAALTFSAAC) form a helical membrane-spanning segment. Residues 127-152 (ASSGITVLIDNDLDLCSENHCASFES) lie on the Extracellular side of the membrane. Residues 153–173 (ATAMAFLSWFALSPSFLLNFW) traverse the membrane as a helical segment. Over 174–178 (SMASG) the chain is Cytoplasmic.

Belongs to the Casparian strip membrane proteins (CASP) family. As to quaternary structure, homodimer and heterodimers.

It is found in the cell membrane. The protein is CASP-like protein 5A1 of Oryza sativa subsp. japonica (Rice).